A 316-amino-acid chain; its full sequence is MADSKHQVIFCNDSPKRVLVSVIKTTPIKPRTTADSLMPTSPGFSDFMVYPWRWGENAHNVTLGPGSGSGAASPTRTSSSPAEADPLSCPEHLKDGIRRGRPRADTVRELINEGENSTSRIRCNICNRVFPREKSLQAHKRTHTGERPYLCDYPDCGKAFVQSGQLKTHQRLHTGEKPFVCSEKACGSRFTHANRHCAKHPYARLKREEPTGGPGKSQGADNKAVAEWLTKYWQTREQRSPVPGKAKPQNKSPLEDQEQQDPLDFLPSDEGEEEEQEEEKNAPSGGVVTARRRLQEQRERLHGALALIELANNLSA.

Residues 61-97 (VTLGPGSGSGAASPTRTSSSPAEADPLSCPEHLKDGI) form a disordered region. Positions 70–82 (GAASPTRTSSSPA) are enriched in low complexity. C2H2-type zinc fingers lie at residues 121-143 (IRCN…KRTH) and 149-173 (YLCD…QRLH). The segment at 234-294 (QTREQRSPVP…GGVVTARRRL (61 aa)) is disordered. Acidic residues predominate over residues 255–278 (EDQEQQDPLDFLPSDEGEEEEQEE). Residues 289–313 (TARRRLQEQRERLHGALALIELANN) adopt a coiled-coil conformation.

It belongs to the krueppel C2H2-type zinc-finger protein family.

The protein resides in the nucleus. Functionally, transcriptional activator. The chain is Zinc finger protein 367 (znf367) from Danio rerio (Zebrafish).